The primary structure comprises 322 residues: HPr kinase/phosphorylase (322 aa).

Catalysis depends on residues H146 and K167. 161–168 is a binding site for ATP; it reads GDSGLGKS. Residue S168 coordinates Mg(2+). D185 serves as the catalytic Proton acceptor; for phosphorylation activity. Proton donor; for dephosphorylation activity. The important for the catalytic mechanism of both phosphorylation and dephosphorylation stretch occupies residues 209–218; that stretch reads LEVRGLGLLD. E210 contacts Mg(2+). The active site involves R250. Residues 271 to 276 form an important for the catalytic mechanism of dephosphorylation region; it reads QVAAGR.

Belongs to the HPrK/P family. In terms of assembly, homohexamer. Requires Mg(2+) as cofactor.

It carries out the reaction [HPr protein]-L-serine + ATP = [HPr protein]-O-phospho-L-serine + ADP + H(+). It catalyses the reaction [HPr protein]-O-phospho-L-serine + phosphate + H(+) = [HPr protein]-L-serine + diphosphate. In terms of biological role, catalyzes the ATP- as well as the pyrophosphate-dependent phosphorylation of a specific serine residue in HPr, a phosphocarrier protein of the phosphoenolpyruvate-dependent sugar phosphotransferase system (PTS). HprK/P also catalyzes the pyrophosphate-producing, inorganic phosphate-dependent dephosphorylation (phosphorolysis) of seryl-phosphorylated HPr (P-Ser-HPr). In Burkholderia lata (strain ATCC 17760 / DSM 23089 / LMG 22485 / NCIMB 9086 / R18194 / 383), this protein is HPr kinase/phosphorylase.